The following is a 956-amino-acid chain: Angiomotin-like protein 1 (956 aa).

The tract at residues 197–246 (QSQFFRGQQQQQQQQGAVGHGYYMAGGTSQKSRTEGRPTVNRANSGQAHK) is disordered. 2 positions are modified to phosphoserine: Ser-241 and Ser-269. Residues 259–279 (RSLSERIMQLSLERNGAKQHL) are a coiled coil. Disordered stretches follow at residues 274 to 322 (GAKQ…QMMS), 382 to 405 (PSTM…LHSV), and 411 to 430 (LPMA…SQQL). The span at 282–294 (SGNGKGFKVGGGP) shows a compositional bias: gly residues. Ser-295 carries the post-translational modification Phosphoserine. Residues 382–398 (PSTMQQHSPMSSQTSSA) show a composition bias toward polar residues. 2 coiled-coil regions span residues 438–639 (VERA…WLER) and 665–694 (ALLE…YLEE). At Ser-720 the chain carries Phosphoserine. A coiled-coil region spans residues 729–762 (SLEAHIWQEEEEVVQANRRCQDMEYTIKNLHAKI). The tract at residues 773-823 (QQRSRKDAGKTDSSSLRPARSVPSIAAATGTHSRQTSLTSSQLAEEKKEEK) is disordered. Phosphoserine is present on residues Ser-793, Ser-805, and Ser-828. A compositionally biased stretch (polar residues) spans 802–815 (GTHSRQTSLTSSQL). Disordered stretches follow at residues 841 to 880 (ASAP…TQTD) and 894 to 944 (PSRG…LHKP). The segment covering 852–866 (SALSSIASTTAASSA) has biased composition (low complexity). The residue at position 900 (Ser-900) is a Phosphoserine. Thr-902 carries the post-translational modification Phosphothreonine. Position 906 is a phosphoserine (Ser-906). Positions 953 to 956 (EVLI) match the PDZ-binding motif.

This sequence belongs to the angiomotin family. Polyubiquitinated by NEDD4, leading to proteasomal degradation.

It is found in the cell junction. The protein localises to the tight junction. Its function is as follows. Inhibits the Wnt/beta-catenin signaling pathway, probably by recruiting CTNNB1 to recycling endosomes and hence preventing its translocation to the nucleus. This Homo sapiens (Human) protein is Angiomotin-like protein 1 (AMOTL1).